The chain runs to 33 residues: Photosystem II reaction center protein Psb30 (33 aa).

A helical transmembrane segment spans residues 5–25; that stretch reads LALTLVSLVLVVSAGPLVVVL.

It belongs to the Psb30/Ycf12 family. In terms of assembly, PSII is composed of 1 copy each of membrane proteins PsbA, PsbB, PsbC, PsbD, PsbE, PsbF, PsbH, PsbI, PsbJ, PsbK, PsbL, PsbM, PsbT, PsbX, PsbY, PsbZ, Psb30/Ycf12, peripheral proteins of the oxygen-evolving complex and a large number of cofactors. It forms dimeric complexes.

The protein resides in the plastid. Its subcellular location is the chloroplast thylakoid membrane. In terms of biological role, a core subunit of photosystem II (PSII), required for optimal photosynthesis, probably helps stabilize the reaction center. This is Photosystem II reaction center protein Psb30 from Chlamydomonas reinhardtii (Chlamydomonas smithii).